Here is a 519-residue protein sequence, read N- to C-terminus: MSDLFEDPAPSRNTPEFTVSELSGAVKRVIEGEFGLVRVRGEIGRVSRPASGHLYFDLKDDRAVMAAICWKGQAGRLSVRPEEGMEVVATGRMTTFPGQSKYQIIVEDMAPAGAGALMAMLEKRRAALAAEGLFDAARKRPLPYLPRVIGVVTSPSGAVIRDILHRLRDRFPSHVLIWPVAVQGEKCAPEVAAAIRGFNALPEGGPIPRPDLLIVARGGGSLEDLWGFNEEIVVRAAAESRIPLISAVGHETDTTLIDHAADRRAPTPTAAAEMAVPVRLELLAGLDGQGARLSRCAAETIRRRDQRLRDLARALPRLESLVAGPSQRFDLWSGRLSGALGQSVAARRARLEPLGAHLRPRLLADLVARQKDRLGDRTRSLETCLGRRAERARDRFEALSARLAPAFARLIAETERATRRDAATLGTLAARLDAAPEARLARLSDRLEALDRLRQTLGYRETLKRGYAVVRADGAVVTTKAEAGTAAVLEIEFQDGRLSVGRGKTRKPKEEPPAQGSLL.

The segment at 500 to 519 is disordered; that stretch reads VGRGKTRKPKEEPPAQGSLL.

The protein belongs to the XseA family. Heterooligomer composed of large and small subunits.

Its subcellular location is the cytoplasm. The catalysed reaction is Exonucleolytic cleavage in either 5'- to 3'- or 3'- to 5'-direction to yield nucleoside 5'-phosphates.. In terms of biological role, bidirectionally degrades single-stranded DNA into large acid-insoluble oligonucleotides, which are then degraded further into small acid-soluble oligonucleotides. The sequence is that of Exodeoxyribonuclease 7 large subunit from Cereibacter sphaeroides (strain KD131 / KCTC 12085) (Rhodobacter sphaeroides).